Here is a 509-residue protein sequence, read N- to C-terminus: Lysine--tRNA ligase (509 aa).

Positions 419 and 426 each coordinate Mg(2+).

The protein belongs to the class-II aminoacyl-tRNA synthetase family. In terms of assembly, homodimer. Mg(2+) is required as a cofactor.

It localises to the cytoplasm. The enzyme catalyses tRNA(Lys) + L-lysine + ATP = L-lysyl-tRNA(Lys) + AMP + diphosphate. This chain is Lysine--tRNA ligase, found in Methylobacillus flagellatus (strain ATCC 51484 / DSM 6875 / VKM B-1610 / KT).